We begin with the raw amino-acid sequence, 159 residues long: Eukaryotic translation initiation factor 5A-1 (159 aa).

Residues 1–12 show a composition bias toward basic and acidic residues; that stretch reads MSDEEHHFESKA. Positions 1–23 are disordered; the sequence is MSDEEHHFESKADAGASKTYPQQ. Residue lysine 52 is modified to Hypusine.

The protein belongs to the eIF-5A family. In terms of processing, lys-52 undergoes hypusination, a unique post-translational modification that consists in the addition of a butylamino group from spermidine to lysine side chain, leading to the formation of the unusual amino acid hypusine. eIF-5As are the only known proteins to undergo this modification, which is essential for their function.

Its function is as follows. Translation factor that promotes translation elongation and termination, particularly upon ribosome stalling at specific amino acid sequence contexts. Binds between the exit (E) and peptidyl (P) site of the ribosome and promotes rescue of stalled ribosome: specifically required for efficient translation of polyproline-containing peptides as well as other motifs that stall the ribosome. Acts as a ribosome quality control (RQC) cofactor by joining the RQC complex to facilitate peptidyl transfer during CAT tailing step. This chain is Eukaryotic translation initiation factor 5A-1 (EIF-5A1), found in Nicotiana plumbaginifolia (Leadwort-leaved tobacco).